Reading from the N-terminus, the 212-residue chain is Uridine kinase (212 aa).

Gly-13–Ser-20 provides a ligand contact to ATP.

The protein belongs to the uridine kinase family.

The protein resides in the cytoplasm. The enzyme catalyses uridine + ATP = UMP + ADP + H(+). It carries out the reaction cytidine + ATP = CMP + ADP + H(+). Its pathway is pyrimidine metabolism; CTP biosynthesis via salvage pathway; CTP from cytidine: step 1/3. It participates in pyrimidine metabolism; UMP biosynthesis via salvage pathway; UMP from uridine: step 1/1. The polypeptide is Uridine kinase (Shewanella halifaxensis (strain HAW-EB4)).